Here is a 286-residue protein sequence, read N- to C-terminus: MELIIISGRSGSGKSVALRALEDVGYYCVDNLPLPLIPELAGFLSNSGRSAVVSLDIRNIPENPESIEALLEQLSKLTIQTKIIFLDCERNTLIRRYSDTRRLHPLSNKDLSLESAIDLENTLLEPLYQQANYIIDTTNISSHELAENLRGILRGSTDKALKIVFESFGFKYGLPADADYVFDVRFLPNPHWNPELRPMTGLEQPVIDFLERQTEVHNFIYQTRNYLEMWLPMLEKNNRSYLTIAIGCTGGKHRSVFIAEQLAKYFQSRDKDVQIRHRSLEKHHKK.

8-15 contacts ATP; that stretch reads GRSGSGKS. 56–59 provides a ligand contact to GTP; that stretch reads DIRN.

It belongs to the RapZ-like family.

Displays ATPase and GTPase activities. This is Nucleotide-binding protein APL_0334 from Actinobacillus pleuropneumoniae serotype 5b (strain L20).